The sequence spans 687 residues: DNA-directed RNA polymerase subunit beta' (687 aa).

Zn(2+) is bound by residues C69, C71, C87, and C90. Mg(2+) contacts are provided by D495, D497, and D499.

It belongs to the RNA polymerase beta' chain family. RpoC1 subfamily. In plastids the minimal PEP RNA polymerase catalytic core is composed of four subunits: alpha, beta, beta', and beta''. When a (nuclear-encoded) sigma factor is associated with the core the holoenzyme is formed, which can initiate transcription. The cofactor is Mg(2+). Requires Zn(2+) as cofactor.

The protein localises to the plastid. The protein resides in the chloroplast. It catalyses the reaction RNA(n) + a ribonucleoside 5'-triphosphate = RNA(n+1) + diphosphate. Functionally, DNA-dependent RNA polymerase catalyzes the transcription of DNA into RNA using the four ribonucleoside triphosphates as substrates. The sequence is that of DNA-directed RNA polymerase subunit beta' from Solanum tuberosum (Potato).